The chain runs to 282 residues: Pantothenate synthetase (282 aa).

30–37 (MGGLHQGH) serves as a coordination point for ATP. Residue His37 is the Proton donor of the active site. A (R)-pantoate-binding site is contributed by Gln61. Gln61 provides a ligand contact to beta-alanine. 146–149 (GQKD) provides a ligand contact to ATP. Position 152 (Gln152) interacts with (R)-pantoate. ATP-binding positions include Ile175 and 183–186 (MSTR).

Belongs to the pantothenate synthetase family. Homodimer.

It localises to the cytoplasm. It carries out the reaction (R)-pantoate + beta-alanine + ATP = (R)-pantothenate + AMP + diphosphate + H(+). Its pathway is cofactor biosynthesis; (R)-pantothenate biosynthesis; (R)-pantothenate from (R)-pantoate and beta-alanine: step 1/1. Catalyzes the condensation of pantoate with beta-alanine in an ATP-dependent reaction via a pantoyl-adenylate intermediate. The sequence is that of Pantothenate synthetase from Vesicomyosocius okutanii subsp. Calyptogena okutanii (strain HA).